A 103-amino-acid polypeptide reads, in one-letter code: uncharacterized protein (103 aa).

2 helical membrane-spanning segments follow: residues 42–62 and 65–85; these read PFPLLRLLSVTLFISSLVLLA and TGTLNIFSYSYVVMVVLFICA.

Its subcellular location is the membrane. This is an uncharacterized protein from Saccharomyces cerevisiae (strain ATCC 204508 / S288c) (Baker's yeast).